A 94-amino-acid chain; its full sequence is Selenoprotein K (94 aa).

Residues 20–42 form a helical membrane-spanning segment; the sequence is VSFLTDFFWGIAEFVVFFFKTLL. Positions 46–94 are disordered; sequence VKKRRGYGSSSDSRYDDGRGPPGNPPRRMGRISHLRGPSPPPMAGGUGR. Position 92 (selenocysteine 92) is a non-standard amino acid, selenocysteine.

Belongs to the selenoprotein K family. Interacts with DERL1, DERL2, DERL3 and SELENOS. The SELENOK-SELENOS complex interacts with VCP. Interacts with ZDHHC6. Post-translationally, cleaved by CAPN2/m-calpain in resting macrophages but not in activated macrophages. Macrophage activation up-regulates expression of the calpain inhibitor CAST/calpastatin, resulting in inhibition of CAPN2 activity. In terms of processing, truncated SELENOK proteins produced by failed UGA/Sec decoding are ubiquitinated by the CRL2(KLHDC2) complex, which recognizes the diglycine (Gly-Gly) at the C-terminus of truncated SELENOK proteins. In terms of tissue distribution, high expression in spleen and intestine (at protein level). Expressed in a range of immune cells including T and B-cells and also in myeloid cells including macrophages, neutrophils and dendritic cells (at protein level).

It is found in the endoplasmic reticulum membrane. Its subcellular location is the cell membrane. Its function is as follows. Required for Ca(2+) flux in immune cells and plays a role in T-cell proliferation and in T-cell and neutrophil migration. Involved in endoplasmic reticulum-associated degradation (ERAD) of soluble glycosylated proteins. Required for palmitoylation and cell surface expression of CD36 and involved in macrophage uptake of low-density lipoprotein and in foam cell formation. Together with ZDHHC6, required for palmitoylation of ITPR1 in immune cells, leading to regulate ITPR1 stability and function. Plays a role in protection of cells from ER stress-induced apoptosis. Protects cells from oxidative stress when overexpressed in cardiomyocytes. This chain is Selenoprotein K, found in Mus musculus (Mouse).